Here is a 49-residue protein sequence, read N- to C-terminus: DNA-directed RNA polymerase subunit Rpo12 (49 aa).

3 residues coordinate Zn(2+): C11, C27, and C30.

This sequence belongs to the archaeal Rpo12/eukaryotic RPC10 RNA polymerase subunit family. As to quaternary structure, part of the RNA polymerase complex. Zn(2+) is required as a cofactor.

Its subcellular location is the cytoplasm. The catalysed reaction is RNA(n) + a ribonucleoside 5'-triphosphate = RNA(n+1) + diphosphate. Functionally, DNA-dependent RNA polymerase (RNAP) catalyzes the transcription of DNA into RNA using the four ribonucleoside triphosphates as substrates. This is DNA-directed RNA polymerase subunit Rpo12 from Thermococcus onnurineus (strain NA1).